A 161-amino-acid chain; its full sequence is MPSMDIVSEVNEVELRNAVDNTKRELATRFDFRGKTADVEYKDHVVTLTAEDDFQCQQLVDILRMQLSKRNVDPSSMEVDEKAIHSGKTFSLKVKFKEGIETLIAKKLVKLIKDSKLKVQASIQGEKVRVTGKKRDDLQAVMALARESELGQPFQFDNFKD.

It belongs to the YajQ family.

In terms of biological role, nucleotide-binding protein. The protein is Nucleotide-binding protein Shew185_3601 of Shewanella baltica (strain OS185).